Reading from the N-terminus, the 95-residue chain is Acyl carrier protein (95 aa).

Residues 4 to 79 (KEIFERIEQV…HVMELTLDLV (76 aa)) form the Carrier domain. O-(pantetheine 4'-phosphoryl)serine is present on Ser-39.

The protein belongs to the acyl carrier protein (ACP) family. Post-translationally, 4'-phosphopantetheine is transferred from CoA to a specific serine of apo-ACP by AcpS. This modification is essential for activity because fatty acids are bound in thioester linkage to the sulfhydryl of the prosthetic group.

The protein resides in the cytoplasm. The protein operates within lipid metabolism; fatty acid biosynthesis. Its function is as follows. Carrier of the growing fatty acid chain in fatty acid biosynthesis. The polypeptide is Acyl carrier protein (Saccharopolyspora erythraea (strain ATCC 11635 / DSM 40517 / JCM 4748 / NBRC 13426 / NCIMB 8594 / NRRL 2338)).